Here is a 290-residue protein sequence, read N- to C-terminus: Bifunctional protein FolD (290 aa).

Residues 167-169 (GRS), Ser-192, and Ile-233 each bind NADP(+).

Belongs to the tetrahydrofolate dehydrogenase/cyclohydrolase family. In terms of assembly, homodimer.

It carries out the reaction (6R)-5,10-methylene-5,6,7,8-tetrahydrofolate + NADP(+) = (6R)-5,10-methenyltetrahydrofolate + NADPH. The enzyme catalyses (6R)-5,10-methenyltetrahydrofolate + H2O = (6R)-10-formyltetrahydrofolate + H(+). Its pathway is one-carbon metabolism; tetrahydrofolate interconversion. Its function is as follows. Catalyzes the oxidation of 5,10-methylenetetrahydrofolate to 5,10-methenyltetrahydrofolate and then the hydrolysis of 5,10-methenyltetrahydrofolate to 10-formyltetrahydrofolate. This chain is Bifunctional protein FolD, found in Azorhizobium caulinodans (strain ATCC 43989 / DSM 5975 / JCM 20966 / LMG 6465 / NBRC 14845 / NCIMB 13405 / ORS 571).